Here is a 330-residue protein sequence, read N- to C-terminus: 3'-5' exonuclease (330 aa).

Residues 1 to 92 (MDQYLIKMST…DGTPSPEKEI (92 aa)) form a disordered region. Composition is skewed to basic and acidic residues over residues 27-39 (NTTR…KEKI) and 48-66 (KDTP…ENPP). Residues Ser-79 and Ser-87 each carry the phosphoserine modification. The 3'-5' exonuclease domain maps to 117 to 289 (SADEVMQWVE…IGQVIYRDIE (173 aa)). Asp-139, Glu-141, and Asp-277 together coordinate Mg(2+).

Belongs to the WRNexo family.

The protein localises to the nucleus. In terms of biological role, has exonuclease activity on both single-stranded and duplex templates bearing overhangs, but not blunt ended duplex DNA, and cleaves in a 3'-5' direction. Essential for the formation of DNA replication focal centers. Has an important role in maintaining genome stability. This chain is 3'-5' exonuclease, found in Drosophila virilis (Fruit fly).